The primary structure comprises 209 residues: GTP-binding nuclear protein Ran1A (209 aa).

In terms of domain architecture, Small GTPase Ran-type spans 1-162 (NFKLVIVGDG…LYLARKLAGD (162 aa)). 9–16 (DGGTGKTT) is a binding site for GTP. The segment at 28-36 (KKYEPTIGV) is switch-I. GTP is bound by residues Gly59, 113-116 (NKVD), and 141-143 (SAK). Residues 59–75 (GQEKFGGLRDGYYIHGQ) are switch-II. Over residues 187-196 (QHEAELAQAA) the composition is skewed to low complexity. Positions 187 to 209 (QHEAELAQAASQPLPDDDDDAFD) are disordered.

This sequence belongs to the small GTPase superfamily. Ran family. In terms of assembly, found in a nuclear export complex with RanGTP, exportin and pre-miRNA.

Its subcellular location is the nucleus. GTP-binding protein involved in nucleocytoplasmic transport. Required for the import of protein into the nucleus and also for RNA export. Involved in chromatin condensation and control of cell cycle. The polypeptide is GTP-binding nuclear protein Ran1A (RAN1A) (Lotus japonicus (Lotus corniculatus var. japonicus)).